Reading from the N-terminus, the 451-residue chain is MRGEVCHIHIGQAGTQLGNSAWELYLLEHGLGADGRLDPEKGEDINAGGSFETFFTETGSGKYVPRSIFVDLDPSPIDEIRTGPYRQLFHPEQLISGKEDAANNYARGHYTVGKELVDTVVDRVRRLSDNCSSLQGFLVFHSFGGGTGSGFGALLLERLSTEYGKKSKLEFAVYPSPRVSTAVVEPYNAVLSTHSTIENSDCTFLVDNEAVYDICRRNLDIPRPSFEHLNRLIAQVVSSITSSLRFDGALNVDLNEFQTNLVPFPRIHYPLISYAPVISSNRSSHESFKVQDLTLQCAEPNNQMVVCDPRNGKYMAVALLYRGDCVPRDCTQAIASLKAKASFNLVEWCPTGFKVGINYQKPARVPGSELAPVDRSVSMLSNTTAISEAWSRLDHKFDLMYSKRAFVHWYVGEGMEEGEFSEAREDLAALEKDYEEVAGDSLDMEGEEAEY.

The GTP site is built by Gln-12, Asp-73, Ser-142, Gly-146, Thr-147, Thr-181, Asn-208, and Asn-230. A Mg(2+)-binding site is contributed by Asp-73. Glu-256 is an active-site residue.

This sequence belongs to the tubulin family. In terms of assembly, dimer of alpha and beta chains. A typical microtubule is a hollow water-filled tube with an outer diameter of 25 nm and an inner diameter of 15 nM. Alpha-beta heterodimers associate head-to-tail to form protofilaments running lengthwise along the microtubule wall with the beta-tubulin subunit facing the microtubule plus end conferring a structural polarity. Microtubules usually have 13 protofilaments but different protofilament numbers can be found in some organisms and specialized cells. It depends on Mg(2+) as a cofactor.

The protein localises to the cytoplasm. The protein resides in the cytoskeleton. The enzyme catalyses GTP + H2O = GDP + phosphate + H(+). Functionally, tubulin is the major constituent of microtubules, a cylinder consisting of laterally associated linear protofilaments composed of alpha- and beta-tubulin heterodimers. Microtubules grow by the addition of GTP-tubulin dimers to the microtubule end, where a stabilizing cap forms. Below the cap, tubulin dimers are in GDP-bound state, owing to GTPase activity of alpha-tubulin. In Emericella nidulans (strain FGSC A4 / ATCC 38163 / CBS 112.46 / NRRL 194 / M139) (Aspergillus nidulans), this protein is Tubulin alpha-2 chain (tubB).